A 387-amino-acid chain; its full sequence is ATP phosphoribosyltransferase regulatory subunit (387 aa).

Belongs to the class-II aminoacyl-tRNA synthetase family. HisZ subfamily. As to quaternary structure, heteromultimer composed of HisG and HisZ subunits.

The protein localises to the cytoplasm. It functions in the pathway amino-acid biosynthesis; L-histidine biosynthesis; L-histidine from 5-phospho-alpha-D-ribose 1-diphosphate: step 1/9. In terms of biological role, required for the first step of histidine biosynthesis. May allow the feedback regulation of ATP phosphoribosyltransferase activity by histidine. The polypeptide is ATP phosphoribosyltransferase regulatory subunit (Polynucleobacter asymbioticus (strain DSM 18221 / CIP 109841 / QLW-P1DMWA-1) (Polynucleobacter necessarius subsp. asymbioticus)).